Consider the following 526-residue polypeptide: MGWLFLKVLLVGMVFSGLLYPFVDFSISGETRAPRPNIVIILADDMGWGDLGANWAETKDTTNLDKMASEGMRFVDFHAAASTCSPSRASLLTGRLGLRNGVTHNFAVTSVGGLPLNETTLAEVLQQAGYVTAMIGKWHLGHHGSYHPSFRGFDYYFGIPYSNDMGCTDNPGYNYPPCPACPQSDGRWRNPDRDCYTDVALPLYENLNIVEQPVNLSGLAQKYAERAVEFIEQASTSGRPFLLYVGLAHMHVPLSVTPPLANPQSQRLYRASLQEMDSLVGQIKDKVDHVAKENTLLWFAGDNGPWAQKCELAGSMGPFSGLWQTHQGGSPAKQTTWEGGHRVPALAYWPGRVPVNVTSTALLSLLDIFPTVIALAGASLPPNRKFDGVDVSEVLFGKSQTGHRVLFHPNSGAAGEYGALQTVRLDRYKAFYITGGAKACDGGVGPEQHHVSPLIFNLEDDAAESSPLQKGSPEYQELLPKVTRVLADVLQDIADDNSSQADYTQDPSVTPCCNPYQITCRCQPGE.

An N-terminal signal peptide occupies residues 1 to 16 (MGWLFLKVLLVGMVFS). Residues D44, D45, and C84 each coordinate Ca(2+). C84 acts as the Nucleophile in catalysis. C84 carries the 3-oxoalanine (Cys) modification. The N-linked (GlcNAc...) asparagine glycan is linked to N117. K137 contacts substrate. The active site involves H139. Residue S162 participates in substrate binding. N215 is a glycosylation site (N-linked (GlcNAc...) asparagine). H251 is a binding site for substrate. D302 and N303 together coordinate Ca(2+). Residues N356 and N497 are each glycosylated (N-linked (GlcNAc...) asparagine).

The protein belongs to the sulfatase family. Ca(2+) is required as a cofactor. N-glycosylated with both high mannose and complex type sugars. Post-translationally, the conversion to 3-oxoalanine (also known as C-formylglycine, FGly), of a serine or cysteine residue in prokaryotes and of a cysteine residue in eukaryotes, is critical for catalytic activity. In terms of processing, 63-kDa precursor undergoes proteolytic processing in two steps, yielding two fragments in the first step (apparent molecular masses of 44 and 18 kDa). In the second step, the 44-kDa fragment is processed further to the 34- and 10-kDa chains. The 10-kDa chain is a cleavage product of the 44-kDa fragment but linked to the 18-kDa chain through a disulfide bridge.

Its subcellular location is the lysosome. It catalyses the reaction an aryl sulfate + H2O = a phenol + sulfate + H(+). The catalysed reaction is Hydrolysis of the 3-sulfate groups of the N-sulfo-D-glucosamine 3-O-sulfate units of heparin.. Its function is as follows. Displays arylsulfatase activity at acidic pH towards the artificial substrate p-nitrocatechol sulfate. Catalyzes the hydrolysis of the 3-sulfate groups of the N-sulfo-D-glucosamine 3-O-sulfate units of heparin. The polypeptide is Arylsulfatase G (Arsg) (Rattus norvegicus (Rat)).